The sequence spans 156 residues: Succinate dehydrogenase assembly factor 2-B, mitochondrial (156 aa).

A mitochondrion-targeting transit peptide spans 1-24 (MLRQFIISTVGRRQPLLMILQSRL).

It belongs to the SDHAF2 family. In terms of assembly, interacts with the flavoprotein subunit within the SDH catalytic dimer.

It localises to the mitochondrion matrix. Functionally, plays an essential role in the assembly of succinate dehydrogenase (SDH), an enzyme complex (also referred to as respiratory complex II) that is a component of both the tricarboxylic acid (TCA) cycle and the mitochondrial electron transport chain, and which couples the oxidation of succinate to fumarate with the reduction of ubiquinone (coenzyme Q) to ubiquinol. Required for flavinylation (covalent attachment of FAD) of the flavoprotein subunit of the SDH catalytic dimer. This chain is Succinate dehydrogenase assembly factor 2-B, mitochondrial, found in Drosophila yakuba (Fruit fly).